Reading from the N-terminus, the 61-residue chain is Small ribosomal subunit protein uS14 (61 aa).

Residues Cys24, Cys27, Cys40, and Cys43 each contribute to the Zn(2+) site.

The protein belongs to the universal ribosomal protein uS14 family. Zinc-binding uS14 subfamily. In terms of assembly, part of the 30S ribosomal subunit. Contacts proteins S3 and S10. It depends on Zn(2+) as a cofactor.

Functionally, binds 16S rRNA, required for the assembly of 30S particles and may also be responsible for determining the conformation of the 16S rRNA at the A site. In Pseudothermotoga lettingae (strain ATCC BAA-301 / DSM 14385 / NBRC 107922 / TMO) (Thermotoga lettingae), this protein is Small ribosomal subunit protein uS14.